The following is an 87-amino-acid chain: UPF0250 protein NT01EI_2946 (87 aa).

The protein belongs to the UPF0250 family.

The protein is UPF0250 protein NT01EI_2946 of Edwardsiella ictaluri (strain 93-146).